Reading from the N-terminus, the 1199-residue chain is Tubulin-specific chaperone D (1199 aa).

2 disordered regions span residues 1–23 and 337–361; these read MALSEEPAAGAAEDPVEDPVEDA and QHSIQNPREPVTQAETPDSDGQDDV. Over residues 14-23 the composition is skewed to acidic residues; that stretch reads DPVEDPVEDA. 4 HEAT repeats span residues 368-406, 603-639, 757-793, and 1111-1147; these read VIEQLLVGLKDKDTIVRWSAAKGIGRMAGRLPKELADDV, EHTAREVFPRLLSMTQSPDLHTRHGAVLACAEVARSL, AAAQEELVKLYLAELQSPEEMTRCGCALALGALPAFF, and GDVRRKVLLQLFLLLCHPFPVIRKNTASQVYEMVLTY.

Belongs to the TBCD family. In terms of assembly, found in a complex with at least ARL2, PPP2CB, PPP2R1A, PPP2R2A, PPP2R5E and TBCD. Interacts with PPP2CB. Part of a supercomplex made of cofactors A to E. Cofactors A and D function by capturing and stabilizing tubulin in a quasi-native conformation. Cofactor E binds to the cofactor D-tubulin complex; interaction with cofactor C then causes the release of tubulin polypeptides that are committed to the native state. Interacts with ARL2; interaction is enhanced with the GDP-bound form of ARL2. Does not interact with ARL3, ARL4A and ARL4D. Interacts with beta tubulin. Interacts with TBCE.

It is found in the cell junction. Its subcellular location is the tight junction. The protein localises to the lateral cell membrane. The protein resides in the cytoplasm. It localises to the adherens junction. It is found in the cytoskeleton. Its subcellular location is the microtubule organizing center. The protein localises to the centrosome. Its function is as follows. Tubulin-folding protein implicated in the first step of the tubulin folding pathway and required for tubulin complex assembly. Involved in the regulation of microtubule polymerization or depolymerization, it modulates microtubule dynamics by capturing GTP-bound beta-tubulin (TUBB). Its ability to interact with beta tubulin is regulated via its interaction with ARL2. Acts as a GTPase-activating protein (GAP) for ARL2. Induces microtubule disruption in absence of ARL2. Increases degradation of beta tubulin, when overexpressed in polarized cells. Promotes epithelial cell detachment, a process antagonized by ARL2. Induces tight adherens and tight junctions disassembly at the lateral cell membrane. Required for correct assembly and maintenance of the mitotic spindle, and proper progression of mitosis. Involved in neuron morphogenesis. The chain is Tubulin-specific chaperone D (TBCD) from Bos taurus (Bovine).